The primary structure comprises 1403 residues: Eukaryotic translation initiation factor 4 gamma (1403 aa).

Polar residues-rich tracts occupy residues 1–11, 19–39, and 50–60; these read MSSKPPSNTPK, ASSQ…TATA, and EPTNTSRANAQ. 4 disordered regions span residues 1 to 381, 439 to 464, 488 to 774, and 861 to 1003; these read MSSK…GSTP, SRSG…RNGF, VVVP…KRDL, and AFSD…EALL. At serine 83 the chain carries Phosphoserine. Polar residues predominate over residues 109 to 137; the sequence is DNTSKPSANSSAERTSSQHQKPETSSQIG. Low complexity-rich tracts occupy residues 190-208 and 231-248; these read SGVS…SVTS and PRPT…ANGA. Over residues 249 to 269 the composition is skewed to polar residues; it reads PTNKPSTDINTTDPATQTTQV. Residues 270–291 are compositionally biased toward low complexity; that stretch reads SASNSPALSGSSTPSNTSSRSN. The segment covering 298 to 308 has biased composition (basic and acidic residues); the sequence is FSEKRHYDRYG. Positions 325–334 are enriched in low complexity; it reads NYNNSGNNRN. 3 stretches are compositionally biased toward polar residues: residues 346–381, 439–460, and 493–508; these read RNYN…GSTP, SRSG…TLSP, and KNAS…SRAE. Residues serine 452, serine 455, serine 456, and serine 459 each carry the phosphoserine modification. Residues 537–714 are compositionally biased toward basic and acidic residues; the sequence is IQEKAEAEAK…GKREADKNPE (178 aa). The segment covering 720 to 737 has biased composition (polar residues); sequence PLASSEANVDTSKQTNAT. The span at 741-754 shows a compositional bias: basic and acidic residues; sequence VVDKTKVEKLKASE. Residues 757–768 are compositionally biased toward low complexity; sequence STSSLSSPSHST. 2 positions are modified to phosphoserine: serine 866 and serine 882. Low complexity predominate over residues 868–886; that stretch reads RGMYSSSRQSSRSGSNTHS. Threonine 884 is modified (phosphothreonine). A phosphoserine mark is found at serine 886, serine 911, serine 919, and serine 921. Tyrosine 923 carries the post-translational modification Phosphotyrosine. Over residues 986–995 the composition is skewed to basic and acidic residues; sequence KLTEKPAETK. Residues 1009-1245 form the MIF4G domain; sequence QRKVKGSLNK…MDVMDSRKNG (237 aa). Residues 1266–1403 form a disordered region; the sequence is AERKKALAES…QKDSNSKTSS (138 aa). Over residues 1284 to 1295 the composition is skewed to basic and acidic residues; it reads HGRDMNRGDSRM. Polar residues-rich tracts occupy residues 1302-1313, 1328-1341, and 1348-1358; these read PPFSSSDWSNNK, SGTQ…SLSS, and VSRTPSRQNSA. Position 1333 is a phosphoserine (serine 1333). Positions 1383–1403 are enriched in basic and acidic residues; sequence LEEHDHDNDGGQKDSNSKTSS.

Belongs to the eukaryotic initiation factor 4G family.

It is found in the cytoplasm. It localises to the perinuclear region. Functionally, component of the protein complex eIF4F, which is involved in the recognition of the mRNA cap, ATP-dependent unwinding of 5'-terminal secondary structure and recruitment of mRNA to the ribosome. The protein is Eukaryotic translation initiation factor 4 gamma (tif471) of Schizosaccharomyces pombe (strain 972 / ATCC 24843) (Fission yeast).